We begin with the raw amino-acid sequence, 404 residues long: Probable tRNA sulfurtransferase (404 aa).

In terms of domain architecture, THUMP spans 60 to 165 (QPIVEALKLV…DEAAYISYEE (106 aa)). Residues 183 to 184 (ML), 208 to 209 (HF), arginine 265, glycine 287, and glutamine 296 contribute to the ATP site.

The protein belongs to the ThiI family.

Its subcellular location is the cytoplasm. It catalyses the reaction [ThiI sulfur-carrier protein]-S-sulfanyl-L-cysteine + a uridine in tRNA + 2 reduced [2Fe-2S]-[ferredoxin] + ATP + H(+) = [ThiI sulfur-carrier protein]-L-cysteine + a 4-thiouridine in tRNA + 2 oxidized [2Fe-2S]-[ferredoxin] + AMP + diphosphate. The catalysed reaction is [ThiS sulfur-carrier protein]-C-terminal Gly-Gly-AMP + S-sulfanyl-L-cysteinyl-[cysteine desulfurase] + AH2 = [ThiS sulfur-carrier protein]-C-terminal-Gly-aminoethanethioate + L-cysteinyl-[cysteine desulfurase] + A + AMP + 2 H(+). Its pathway is cofactor biosynthesis; thiamine diphosphate biosynthesis. Catalyzes the ATP-dependent transfer of a sulfur to tRNA to produce 4-thiouridine in position 8 of tRNAs, which functions as a near-UV photosensor. Also catalyzes the transfer of sulfur to the sulfur carrier protein ThiS, forming ThiS-thiocarboxylate. This is a step in the synthesis of thiazole, in the thiamine biosynthesis pathway. The sulfur is donated as persulfide by IscS. This is Probable tRNA sulfurtransferase from Streptococcus pyogenes serotype M1.